The sequence spans 507 residues: L-threonine dehydratase biosynthetic IlvA (507 aa).

The residue at position 52 (Lys52) is an N6-(pyridoxal phosphate)lysine. Pyridoxal 5'-phosphate contacts are provided by residues Asn79, 182 to 186 (GGGGL), and Ser309. ACT-like domains follow at residues 333–404 (AVFA…DLTH) and 427–498 (RLFR…EESA).

This sequence belongs to the serine/threonine dehydratase family. As to quaternary structure, homotetramer. It depends on pyridoxal 5'-phosphate as a cofactor.

The enzyme catalyses L-threonine = 2-oxobutanoate + NH4(+). Its pathway is amino-acid biosynthesis; L-isoleucine biosynthesis; 2-oxobutanoate from L-threonine: step 1/1. Catalyzes the anaerobic formation of alpha-ketobutyrate and ammonia from threonine in a two-step reaction. The first step involved a dehydration of threonine and a production of enamine intermediates (aminocrotonate), which tautomerizes to its imine form (iminobutyrate). Both intermediates are unstable and short-lived. The second step is the nonenzymatic hydrolysis of the enamine/imine intermediates to form 2-ketobutyrate and free ammonia. In the low water environment of the cell, the second step is accelerated by RidA. This is L-threonine dehydratase biosynthetic IlvA (ilvA) from Burkholderia multivorans (strain ATCC 17616 / 249).